The chain runs to 57 residues: UPF0391 membrane protein RPD_2934 (57 aa).

The next 2 membrane-spanning stretches (helical) occupy residues tryptophan 6–serine 26 and isoleucine 35–phenylalanine 55.

The protein belongs to the UPF0391 family.

Its subcellular location is the cell membrane. The polypeptide is UPF0391 membrane protein RPD_2934 (Rhodopseudomonas palustris (strain BisB5)).